The chain runs to 88 residues: C-C motif chemokine 18 (88 aa).

The first 19 residues, 1–19 (MKGLAAALLVLCTVALCSC), serve as a signal peptide directing secretion. Disulfide bonds link C29/C53 and C30/C69.

It belongs to the intercrine beta (chemokine CC) family. The Cys-29/Cys-53 disulfide bond is required for activity.

Its subcellular location is the secreted. Chemotactic factor that attracts lymphocytes but not monocytes or granulocytes. May be involved in B-cell migration into B-cell follicles in lymph nodes. Attracts naive T-lymphocytes toward dendritic cells and activated macrophages in lymph nodes, has chemotactic activity for naive T-cells, CD4+ and CD8+ T-cells and thus may play a role in both humoral and cell-mediated immunity responses. The protein is C-C motif chemokine 18 (CCL18) of Macaca mulatta (Rhesus macaque).